Consider the following 74-residue polypeptide: Large ribosomal subunit protein bL28 (74 aa).

Belongs to the bacterial ribosomal protein bL28 family.

This Buchnera aphidicola subsp. Baizongia pistaciae (strain Bp) protein is Large ribosomal subunit protein bL28.